Here is an 861-residue protein sequence, read N- to C-terminus: DNA mismatch repair protein MutS (861 aa).

618–625 (GPNMGGKS) provides a ligand contact to ATP.

The protein belongs to the DNA mismatch repair MutS family.

In terms of biological role, this protein is involved in the repair of mismatches in DNA. It is possible that it carries out the mismatch recognition step. This protein has a weak ATPase activity. This Shewanella sp. (strain ANA-3) protein is DNA mismatch repair protein MutS.